The chain runs to 245 residues: Adenosylcobinamide-GDP ribazoletransferase (245 aa).

The next 6 membrane-spanning stretches (helical) occupy residues 35–55 (WFPL…ALGL), 108–128 (IGAF…IGAH), 137–157 (GVLI…AALV), 176–196 (IAIG…TPVM), 197–217 (TTVT…HLAR), and 222–242 (INGD…LLAA).

The protein belongs to the CobS family. Mg(2+) serves as cofactor.

Its subcellular location is the cell inner membrane. It catalyses the reaction alpha-ribazole + adenosylcob(III)inamide-GDP = adenosylcob(III)alamin + GMP + H(+). The enzyme catalyses alpha-ribazole 5'-phosphate + adenosylcob(III)inamide-GDP = adenosylcob(III)alamin 5'-phosphate + GMP + H(+). It functions in the pathway cofactor biosynthesis; adenosylcobalamin biosynthesis; adenosylcobalamin from cob(II)yrinate a,c-diamide: step 7/7. Joins adenosylcobinamide-GDP and alpha-ribazole to generate adenosylcobalamin (Ado-cobalamin). Also synthesizes adenosylcobalamin 5'-phosphate from adenosylcobinamide-GDP and alpha-ribazole 5'-phosphate. In Nitratidesulfovibrio vulgaris (strain DP4) (Desulfovibrio vulgaris), this protein is Adenosylcobinamide-GDP ribazoletransferase.